A 202-amino-acid polypeptide reads, in one-letter code: Coiled-coil domain-containing protein 85B (202 aa).

Met1 is subject to N-acetylmethionine. 2 coiled-coil regions span residues 44–82 and 118–141; these read RLMQEVNRQLQGHLGEIRELKQLNRRLQAENRELRDLCC and QKLAELEGRQEELLRENLALKELC. Residues 152–162 are compositionally biased toward gly residues; it reads GGPGGAVGSGA. The segment at 152-202 is disordered; it reads GGPGGAVGSGAGPTPELALPPCGPRDLGDGSSSTGSVGSPDQLPLACSPDD. Residues 180–190 are compositionally biased toward low complexity; that stretch reads DGSSSTGSVGS.

It belongs to the CCDC85 family. In terms of assembly, interacts with CEBPB. May interact with CEBPD. Interacts with EURL. Interacts with MCRS1. Interacts with TCF7L2; competes with CTNNB1. Interacts with ANKRD26. Interacts with the beta-catenin family proteins ARVCF, CTNND1, CTNND2 and PKP4. As to expression, expressed in white and brown adipose tissue.

It is found in the nucleus. It localises to the cytoplasm. The protein resides in the cytoskeleton. The protein localises to the microtubule organizing center. Its subcellular location is the centrosome. It is found in the cell junction. It localises to the adherens junction. In terms of biological role, functions as a transcriptional repressor. May inhibit the activity of CTNNB1 in a TP53-dependent manner and thus regulate cell growth. May function in adipocyte differentiation, negatively regulating mitotic clonal expansion. Plays a role in cell-cell adhesion and epithelium development through its interaction with proteins of the beta-catenin family. The protein is Coiled-coil domain-containing protein 85B (Ccdc85b) of Mus musculus (Mouse).